A 110-amino-acid polypeptide reads, in one-letter code: Nucleoid-associated protein RALTA_A1934 (110 aa).

Polar residues predominate over residues Thr-88–Ser-98. The interval Thr-88–Phe-110 is disordered. Positions Pro-101–Phe-110 are enriched in pro residues.

Belongs to the YbaB/EbfC family. In terms of assembly, homodimer.

The protein resides in the cytoplasm. It localises to the nucleoid. In terms of biological role, binds to DNA and alters its conformation. May be involved in regulation of gene expression, nucleoid organization and DNA protection. This Cupriavidus taiwanensis (strain DSM 17343 / BCRC 17206 / CCUG 44338 / CIP 107171 / LMG 19424 / R1) (Ralstonia taiwanensis (strain LMG 19424)) protein is Nucleoid-associated protein RALTA_A1934.